A 360-amino-acid polypeptide reads, in one-letter code: MNYTESSPLRESTAIGFTPELESIIPVPSNKTTCENWREIHHLVFHVANICFAVGLVIPTTLHLHMIFLRGMLTLGCTLYIVWATLYRCALDIMIWNSVFLGVNILHLSYLLYKKRPVKIEKELSGMYRRLFEPLRVPPDLFRRLTGQFCMIQTLKKGQTYAAEDKTSVDDRLSILLKGKMKVSYRGHFLHNIYPCAFIDSPEFRSTQMHKGEKFQVTIIADDNCRFLCWSRERLTYFLESEPFLYEIFRYLIGKDITNKLYSLNDPTLNDKKAKKLEHQLSLCTQISMLEMRNSIASSSDSDDGLHQFLRGTSSMSSLHVSSPHQRASAKMKPIEEGAEDDDDVFEPASPNTLKVHQLP.

The Extracellular portion of the chain corresponds to 1–48 (MNYTESSPLRESTAIGFTPELESIIPVPSNKTTCENWREIHHLVFHVA). N-linked (GlcNAc...) asparagine glycosylation is found at asparagine 2 and asparagine 30. Residues 49–69 (NICFAVGLVIPTTLHLHMIFL) traverse the membrane as a helical segment. Position 70 (arginine 70) is a topological domain, cytoplasmic. The helical transmembrane segment at 71–91 (GMLTLGCTLYIVWATLYRCAL) threads the bilayer. Position 92 (aspartate 92) is a topological domain, extracellular. The helical transmembrane segment at 93 to 113 (IMIWNSVFLGVNILHLSYLLY) threads the bilayer. The interval 93 to 115 (IMIWNSVFLGVNILHLSYLLYKK) is required for interaction with CAV3. At 114–360 (KKRPVKIEKE…PNTLKVHQLP (247 aa)) the chain is on the cytoplasmic side. A required for interaction with KCNK2 region spans residues 136 to 186 (RVPPDLFRRLTGQFCMIQTLKKGQTYAAEDKTSVDDRLSILLKGKMKVSYR). Phosphoserine is present on residues serine 295 and serine 318. Positions 317-360 (SSLHVSSPHQRASAKMKPIEEGAEDDDDVFEPASPNTLKVHQLP) are disordered. Residues 337–346 (EGAEDDDDVF) show a composition bias toward acidic residues. The segment covering 350 to 360 (SPNTLKVHQLP) has biased composition (polar residues).

This sequence belongs to the popeye family. As to quaternary structure, homodimer. Homodimerization requires the C-terminus cytoplasmic region. Interacts (via the C-terminus cytoplasmic tail) with TJP1. Interacts (via the C-terminus cytoplasmic tail) with ARHGEF25/GEFT (via the DH domain). Interacts (via the C-terminus cytoplasmic tail) with VAMP3. Interacts with KCNK2; the interaction enhances KCNK2 surface expression and is inhibited by cAMP. Interacts with CAV3. In terms of tissue distribution, expressed in epithelial cells (at protein level). Expressed in fetal and adult heart and skeletal muscle.

Its subcellular location is the lateral cell membrane. The protein resides in the cell junction. It is found in the tight junction. The protein localises to the membrane. It localises to the cell membrane. Its subcellular location is the sarcolemma. The protein resides in the caveola. Cell adhesion molecule involved in the establishment and/or maintenance of cell integrity. Involved in the formation and regulation of the tight junction (TJ) paracellular permeability barrier in epithelial cells. Plays a role in VAMP3-mediated vesicular transport and recycling of different receptor molecules through its interaction with VAMP3. Plays a role in the regulation of cell shape and movement by modulating the Rho-family GTPase activity through its interaction with ARHGEF25/GEFT. Induces primordial adhesive contact and aggregation of epithelial cells in a Ca(2+)-independent manner. Also involved in striated muscle regeneration and repair and in the regulation of cell spreading. Important for the maintenance of cardiac function. Plays a regulatory function in heart rate dynamics mediated, at least in part, through cAMP-binding and, probably, by increasing cell surface expression of the potassium channel KCNK2 and enhancing current density. Is also a caveolae-associated protein important for the preservation of caveolae structural and functional integrity as well as for heart protection against ischemia injury. This chain is Popeye domain-containing protein 1, found in Homo sapiens (Human).